The chain runs to 119 residues: MEAKAVLRNTPTSPRKMRLVAGLVRGKQVNQAKAILLNSTKAASKNVMLTLKSAVSNYTLNNPDERVSDQELFVKAIFVDGGMTLKRTLPAPMGRAYRIRKRSNHLTIVVDKVKNPVIN.

Belongs to the universal ribosomal protein uL22 family. In terms of assembly, part of the 50S ribosomal subunit.

This protein binds specifically to 23S rRNA; its binding is stimulated by other ribosomal proteins, e.g. L4, L17, and L20. It is important during the early stages of 50S assembly. It makes multiple contacts with different domains of the 23S rRNA in the assembled 50S subunit and ribosome. In terms of biological role, the globular domain of the protein is located near the polypeptide exit tunnel on the outside of the subunit, while an extended beta-hairpin is found that lines the wall of the exit tunnel in the center of the 70S ribosome. This is Large ribosomal subunit protein uL22 from Chlorobium chlorochromatii (strain CaD3).